The chain runs to 236 residues: Phosphoribosylaminoimidazole-succinocarboxamide synthase (236 aa).

It belongs to the SAICAR synthetase family.

The enzyme catalyses 5-amino-1-(5-phospho-D-ribosyl)imidazole-4-carboxylate + L-aspartate + ATP = (2S)-2-[5-amino-1-(5-phospho-beta-D-ribosyl)imidazole-4-carboxamido]succinate + ADP + phosphate + 2 H(+). Its pathway is purine metabolism; IMP biosynthesis via de novo pathway; 5-amino-1-(5-phospho-D-ribosyl)imidazole-4-carboxamide from 5-amino-1-(5-phospho-D-ribosyl)imidazole-4-carboxylate: step 1/2. This chain is Phosphoribosylaminoimidazole-succinocarboxamide synthase, found in Campylobacter jejuni subsp. doylei (strain ATCC BAA-1458 / RM4099 / 269.97).